The chain runs to 1203 residues: Regulator of telomere elongation helicase 1 (1203 aa).

One can recognise a Helicase ATP-binding domain in the interval 7-296 (NGVTVDFPFQ…ARVTQQGELQ (290 aa)). Residue 42-49 (SPTGTGKT) participates in ATP binding. Residues C145, C163, C172, and C207 each contribute to the [4Fe-4S] cluster site. The Nuclear localization signal signature appears at 151–167 (KKQESNHMQISLCRKKV). The DEAH box signature appears at 250-253 (DEAH). The Nuclear localization signal signature appears at 871 to 877 (QKGGRKK). 2 disordered regions span residues 998-1020 (QLDP…TSKG) and 1120-1203 (TTGK…RSKQ). The span at 1004-1020 (HLNQGQPHLSAHPTSKG) shows a compositional bias: polar residues. The segment covering 1123 to 1134 (KDLELEGPRDES) has biased composition (basic and acidic residues). The short motif at 1160-1167 (QSKISSFF) is the PIP-box element. Positions 1169–1181 (QRPDESVRSDDTT) are enriched in basic and acidic residues.

This sequence belongs to the helicase family. RAD3/XPD subfamily. Interacts with TERF1. Interacts (via PIP-box) with PCNA; the interaction is direct and essential for suppressing telomere fragility. Interacts with MMS19; the interaction mediates the association of RTEL1 with the cytosolic iron-sulfur protein assembly (CIA) complex. Widely expressed. Expressed in spleen, thymus, Peyer patches, kidney, and intestine. Not expressed in brain, heart, lung, skeletal muscles, skin and white fat. In the adult gonad, it is highly expressed in the testis, mainly in the spermatogonia and meiotic spermatocytes.

The protein localises to the nucleus. The catalysed reaction is ATP + H2O = ADP + phosphate + H(+). In terms of biological role, a probable ATP-dependent DNA helicase implicated in telomere-length regulation, DNA repair and the maintenance of genomic stability. Acts as an anti-recombinase to counteract toxic recombination and limit crossover during meiosis. Regulates meiotic recombination and crossover homeostasis by physically dissociating strand invasion events and thereby promotes noncrossover repair by meiotic synthesis dependent strand annealing (SDSA) as well as disassembly of D loop recombination intermediates. Also disassembles T loops and prevents telomere fragility by counteracting telomeric G4-DNA structures, which together ensure the dynamics and stability of the telomere. The polypeptide is Regulator of telomere elongation helicase 1 (Mus musculus (Mouse)).